Consider the following 228-residue polypeptide: UPF0502 protein AZOSEA09860 (228 aa).

Belongs to the UPF0502 family.

This Aromatoleum aromaticum (strain DSM 19018 / LMG 30748 / EbN1) (Azoarcus sp. (strain EbN1)) protein is UPF0502 protein AZOSEA09860.